A 630-amino-acid polypeptide reads, in one-letter code: Elongation factor 4 (630 aa).

Residues 1–22 (MTVARNRAGAGPGKGSPISSFA) form a disordered region. Positions 30–211 (ARIRNFCIIA…EVVRQVPAPV (182 aa)) constitute a tr-type G domain. Residues 42–47 (DHGKST) and 158–161 (NKID) contribute to the GTP site.

Belongs to the TRAFAC class translation factor GTPase superfamily. Classic translation factor GTPase family. LepA subfamily.

The protein resides in the cell membrane. It catalyses the reaction GTP + H2O = GDP + phosphate + H(+). Functionally, required for accurate and efficient protein synthesis under certain stress conditions. May act as a fidelity factor of the translation reaction, by catalyzing a one-codon backward translocation of tRNAs on improperly translocated ribosomes. Back-translocation proceeds from a post-translocation (POST) complex to a pre-translocation (PRE) complex, thus giving elongation factor G a second chance to translocate the tRNAs correctly. Binds to ribosomes in a GTP-dependent manner. This chain is Elongation factor 4, found in Rhodococcus opacus (strain B4).